Reading from the N-terminus, the 403-residue chain is S-adenosylmethionine synthase (403 aa).

Residue His15 coordinates ATP. Residue Asp17 participates in Mg(2+) binding. Glu43 provides a ligand contact to K(+). 2 residues coordinate L-methionine: Glu56 and Gln99. Residues 99-109 (QSPDINQGVDR) form a flexible loop region. Residues 166–168 (DAK), 232–233 (KF), Asp241, 247–248 (RK), Ala264, and Lys268 each bind ATP. Asp241 is a binding site for L-methionine. Position 272 (Lys272) interacts with L-methionine.

The protein belongs to the AdoMet synthase family. In terms of assembly, homotetramer; dimer of dimers. The cofactor is Mg(2+). Requires K(+) as cofactor.

It localises to the cytoplasm. The enzyme catalyses L-methionine + ATP + H2O = S-adenosyl-L-methionine + phosphate + diphosphate. The protein operates within amino-acid biosynthesis; S-adenosyl-L-methionine biosynthesis; S-adenosyl-L-methionine from L-methionine: step 1/1. Functionally, catalyzes the formation of S-adenosylmethionine (AdoMet) from methionine and ATP. The overall synthetic reaction is composed of two sequential steps, AdoMet formation and the subsequent tripolyphosphate hydrolysis which occurs prior to release of AdoMet from the enzyme. In Xylella fastidiosa (strain Temecula1 / ATCC 700964), this protein is S-adenosylmethionine synthase.